Here is a 396-residue protein sequence, read N- to C-terminus: Phosphoglycerate kinase (396 aa).

Substrate-binding positions include 21-23 (DLN), R36, 59-62 (HLGR), R113, and R146. ATP-binding positions include K197, E319, and 345–348 (GGDT).

It belongs to the phosphoglycerate kinase family. As to quaternary structure, monomer.

Its subcellular location is the cytoplasm. It catalyses the reaction (2R)-3-phosphoglycerate + ATP = (2R)-3-phospho-glyceroyl phosphate + ADP. Its pathway is carbohydrate degradation; glycolysis; pyruvate from D-glyceraldehyde 3-phosphate: step 2/5. The protein is Phosphoglycerate kinase of Legionella pneumophila (strain Lens).